The primary structure comprises 415 residues: 1-deoxy-D-xylulose 5-phosphate reductoisomerase (415 aa).

Thr-10, Gly-11, Ser-12, Ile-13, Gly-36, Arg-37, Asn-38, and Asn-128 together coordinate NADPH. Lys-129 serves as a coordination point for 1-deoxy-D-xylulose 5-phosphate. Residue Glu-130 participates in NADPH binding. Asp-154 provides a ligand contact to Mn(2+). Ser-155, Glu-156, Ser-192, and His-215 together coordinate 1-deoxy-D-xylulose 5-phosphate. Glu-156 serves as a coordination point for Mn(2+). Gly-221 serves as a coordination point for NADPH. 1-deoxy-D-xylulose 5-phosphate is bound by residues Ser-228, Asn-233, Lys-234, and Glu-237. Glu-237 is a binding site for Mn(2+).

It belongs to the DXR family. The cofactor is Mg(2+). Requires Mn(2+) as cofactor.

It catalyses the reaction 2-C-methyl-D-erythritol 4-phosphate + NADP(+) = 1-deoxy-D-xylulose 5-phosphate + NADPH + H(+). The protein operates within isoprenoid biosynthesis; isopentenyl diphosphate biosynthesis via DXP pathway; isopentenyl diphosphate from 1-deoxy-D-xylulose 5-phosphate: step 1/6. Functionally, catalyzes the NADPH-dependent rearrangement and reduction of 1-deoxy-D-xylulose-5-phosphate (DXP) to 2-C-methyl-D-erythritol 4-phosphate (MEP). The polypeptide is 1-deoxy-D-xylulose 5-phosphate reductoisomerase (Synechococcus sp. (strain CC9605)).